The primary structure comprises 427 residues: Trigger factor (427 aa).

Residues 163–248 (GDTVVIDFVG…IHEVKAKEVP (86 aa)) enclose the PPIase FKBP-type domain.

It belongs to the FKBP-type PPIase family. Tig subfamily.

The protein localises to the cytoplasm. The catalysed reaction is [protein]-peptidylproline (omega=180) = [protein]-peptidylproline (omega=0). Functionally, involved in protein export. Acts as a chaperone by maintaining the newly synthesized protein in an open conformation. Functions as a peptidyl-prolyl cis-trans isomerase. The sequence is that of Trigger factor from Streptococcus pneumoniae (strain JJA).